Here is a 192-residue protein sequence, read N- to C-terminus: Protein CREG1 (192 aa).

A signal peptide spans 1–18 (MVLLAFLCAAALAALARG). Residues Asn95, Asn133, and Asn166 are each glycosylated (N-linked (GlcNAc...) asparagine).

Belongs to the CREG family.

Its subcellular location is the secreted. In terms of biological role, may contribute to the transcriptional control of cell growth and differentiation. The chain is Protein CREG1 (CREG1) from Gallus gallus (Chicken).